Consider the following 162-residue polypeptide: 2-amino-4-hydroxy-6-hydroxymethyldihydropteridine pyrophosphokinase (162 aa).

It belongs to the HPPK family.

The enzyme catalyses 6-hydroxymethyl-7,8-dihydropterin + ATP = (7,8-dihydropterin-6-yl)methyl diphosphate + AMP + H(+). Its pathway is cofactor biosynthesis; tetrahydrofolate biosynthesis; 2-amino-4-hydroxy-6-hydroxymethyl-7,8-dihydropteridine diphosphate from 7,8-dihydroneopterin triphosphate: step 4/4. Functionally, catalyzes the transfer of pyrophosphate from adenosine triphosphate (ATP) to 6-hydroxymethyl-7,8-dihydropterin, an enzymatic step in folate biosynthesis pathway. This is 2-amino-4-hydroxy-6-hydroxymethyldihydropteridine pyrophosphokinase (folK) from Pseudomonas aeruginosa (strain ATCC 15692 / DSM 22644 / CIP 104116 / JCM 14847 / LMG 12228 / 1C / PRS 101 / PAO1).